Here is a 264-residue protein sequence, read N- to C-terminus: Cell division protein FtsQ (264 aa).

The interval 1–24 (MAGPTTAERGDRQQESSGPPPARW) is disordered. The Cytoplasmic portion of the chain corresponds to 1-31 (MAGPTTAERGDRQQESSGPPPARWSGTRRLR). A helical transmembrane segment spans residues 32 to 52 (ALVVLAALLVLLAGGCAWLLY). Residues 53–264 (GSSWLRLERV…VPTAPASSGS (212 aa)) are Extracellular-facing. The POTRA domain occupies 57 to 126 (LRLERVSVSG…HGIGLKVTER (70 aa)).

It belongs to the FtsQ/DivIB family. FtsQ subfamily.

It is found in the cell membrane. In terms of biological role, essential cell division protein. This chain is Cell division protein FtsQ, found in Streptomyces collinus.